The following is a 339-amino-acid chain: N-acetyl-gamma-glutamyl-phosphate reductase (339 aa).

The active site involves Cys145.

Belongs to the NAGSA dehydrogenase family. Type 1 subfamily.

It is found in the cytoplasm. It carries out the reaction N-acetyl-L-glutamate 5-semialdehyde + phosphate + NADP(+) = N-acetyl-L-glutamyl 5-phosphate + NADPH + H(+). The protein operates within amino-acid biosynthesis; L-arginine biosynthesis; N(2)-acetyl-L-ornithine from L-glutamate: step 3/4. In terms of biological role, catalyzes the NADPH-dependent reduction of N-acetyl-5-glutamyl phosphate to yield N-acetyl-L-glutamate 5-semialdehyde. The chain is N-acetyl-gamma-glutamyl-phosphate reductase from Thermotoga sp. (strain RQ2).